Consider the following 420-residue polypeptide: MIDLRLLRDDPERLRASQRARGEDPGLVDAALAADENRRAAVARFEALRAEQKALGRRIASAPPDEKPALLDRAKELAELVKAAEAARDDADAACREALLAISNLVDDEAPRGGEEDFVVLEEIGTPPTFSFPPRDHLELGERLGAIDVERAAKVSGSRFYYLTGVGALLEFALVDLALRQAVTAGFVPVIPPVLVRPPAMEGTGFLGQAAENVFHLEKDDFYLVGTSEVSLAAYHMGEILDAAQLPRRYVGFSTCFRREAGSHGKDTRGIIRVHQFDKVEMFSFTTVGEAAAEHRRLLEWEKQFLTALEIPFRVIDVATGDLGASAARKFDCEAWIPTQGRYREVTSTSNCTEFQARRLDIRMRDEQGIRPLATLNGTLVAIPRTIVAVLENHQQADGSVVVPRALRDYLGTDVLRPKR.

227–229 (TSE) lines the L-serine pocket. ATP is bound by residues 258–260 (RRE) and Val274. Glu281 serves as a coordination point for L-serine. 345–348 (EVTS) provides a ligand contact to ATP. Thr379 is an L-serine binding site.

This sequence belongs to the class-II aminoacyl-tRNA synthetase family. Type-1 seryl-tRNA synthetase subfamily. As to quaternary structure, homodimer. The tRNA molecule binds across the dimer.

Its subcellular location is the cytoplasm. It catalyses the reaction tRNA(Ser) + L-serine + ATP = L-seryl-tRNA(Ser) + AMP + diphosphate + H(+). It carries out the reaction tRNA(Sec) + L-serine + ATP = L-seryl-tRNA(Sec) + AMP + diphosphate + H(+). Its pathway is aminoacyl-tRNA biosynthesis; selenocysteinyl-tRNA(Sec) biosynthesis; L-seryl-tRNA(Sec) from L-serine and tRNA(Sec): step 1/1. Catalyzes the attachment of serine to tRNA(Ser). Is also able to aminoacylate tRNA(Sec) with serine, to form the misacylated tRNA L-seryl-tRNA(Sec), which will be further converted into selenocysteinyl-tRNA(Sec). The protein is Serine--tRNA ligase of Acidothermus cellulolyticus (strain ATCC 43068 / DSM 8971 / 11B).